The sequence spans 83 residues: Cytochrome b559 subunit alpha (83 aa).

Residues Val-21 to Trp-35 form a helical membrane-spanning segment. Residue His-23 participates in heme binding.

This sequence belongs to the PsbE/PsbF family. In terms of assembly, heterodimer of an alpha subunit and a beta subunit. PSII is composed of 1 copy each of membrane proteins PsbA, PsbB, PsbC, PsbD, PsbE, PsbF, PsbH, PsbI, PsbJ, PsbK, PsbL, PsbM, PsbT, PsbX, PsbY, PsbZ, Psb30/Ycf12, at least 3 peripheral proteins of the oxygen-evolving complex and a large number of cofactors. It forms dimeric complexes. Requires heme b as cofactor.

It is found in the plastid. Its subcellular location is the chloroplast thylakoid membrane. Functionally, this b-type cytochrome is tightly associated with the reaction center of photosystem II (PSII). PSII is a light-driven water:plastoquinone oxidoreductase that uses light energy to abstract electrons from H(2)O, generating O(2) and a proton gradient subsequently used for ATP formation. It consists of a core antenna complex that captures photons, and an electron transfer chain that converts photonic excitation into a charge separation. The polypeptide is Cytochrome b559 subunit alpha (Helianthus annuus (Common sunflower)).